The following is a 300-amino-acid chain: 4-hydroxybenzoate octaprenyltransferase (300 aa).

8 consecutive transmembrane segments (helical) span residues 32–52, 55–75, 108–128, 149–169, 178–198, 222–242, 246–266, and 278–298; these read IGTY…SEGA, LKNL…GCVI, LFGI…ALTI, YLPQ…AFAA, AWLL…MYAM, AAVA…GAQH, VYYQ…QHLI, and FLNN…EFLF.

The protein belongs to the UbiA prenyltransferase family. Requires Mg(2+) as cofactor.

Its subcellular location is the cell inner membrane. The enzyme catalyses all-trans-octaprenyl diphosphate + 4-hydroxybenzoate = 4-hydroxy-3-(all-trans-octaprenyl)benzoate + diphosphate. The protein operates within cofactor biosynthesis; ubiquinone biosynthesis. Catalyzes the prenylation of para-hydroxybenzoate (PHB) with an all-trans polyprenyl group. Mediates the second step in the final reaction sequence of ubiquinone-8 (UQ-8) biosynthesis, which is the condensation of the polyisoprenoid side chain with PHB, generating the first membrane-bound Q intermediate 3-octaprenyl-4-hydroxybenzoate. In Hahella chejuensis (strain KCTC 2396), this protein is 4-hydroxybenzoate octaprenyltransferase.